The following is a 208-amino-acid chain: Thymidylate kinase (208 aa).

10–17 (GPDGSGKT) is an ATP binding site.

This sequence belongs to the thymidylate kinase family.

The enzyme catalyses dTMP + ATP = dTDP + ADP. In terms of biological role, phosphorylation of dTMP to form dTDP in both de novo and salvage pathways of dTTP synthesis. The polypeptide is Thymidylate kinase (Listeria welshimeri serovar 6b (strain ATCC 35897 / DSM 20650 / CCUG 15529 / CIP 8149 / NCTC 11857 / SLCC 5334 / V8)).